The sequence spans 240 residues: 2,3-bisphosphoglycerate-dependent phosphoglycerate mutase 2 (240 aa).

Substrate-binding positions include 8 to 15, 21 to 22, R60, 87 to 90, K98, 114 to 115, and 183 to 184; these read RHGQSEWN, TG, ERHY, RR, and GN. The Tele-phosphohistidine intermediate role is filled by H9. Residue E87 is the Proton donor/acceptor of the active site.

Belongs to the phosphoglycerate mutase family. BPG-dependent PGAM subfamily.

The enzyme catalyses (2R)-2-phosphoglycerate = (2R)-3-phosphoglycerate. The protein operates within carbohydrate degradation; glycolysis; pyruvate from D-glyceraldehyde 3-phosphate: step 3/5. Catalyzes the interconversion of 2-phosphoglycerate and 3-phosphoglycerate. This Bacillus cereus (strain ATCC 10987 / NRS 248) protein is 2,3-bisphosphoglycerate-dependent phosphoglycerate mutase 2.